Reading from the N-terminus, the 136-residue chain is MSARGKARSRALDVLFEAEQRSASAFDVLRARREKTDQIVNPYTLEIVEGVVSRQQAIDEFLETYSQGWSLERMPSVDRIILRIGTWELLYNDDVPDGVAVSEAVALAKTLSTDESPQFINGLLGRLQQLKPSLLA.

The protein belongs to the NusB family.

In terms of biological role, involved in transcription antitermination. Required for transcription of ribosomal RNA (rRNA) genes. Binds specifically to the boxA antiterminator sequence of the ribosomal RNA (rrn) operons. This Pseudarthrobacter chlorophenolicus (strain ATCC 700700 / DSM 12829 / CIP 107037 / JCM 12360 / KCTC 9906 / NCIMB 13794 / A6) (Arthrobacter chlorophenolicus) protein is Transcription antitermination protein NusB.